The following is a 328-amino-acid chain: uncharacterized protein (328 aa).

Coiled coils occupy residues 67–190 (FKEQ…VLEE) and 223–251 (MAQRQKQEEVQEVLQEAEKTHQATLDNMM).

This is an uncharacterized protein from Mus musculus (Mouse).